Consider the following 620-residue polypeptide: Chaperone protein HtpG (620 aa).

The a; substrate-binding stretch occupies residues 1–334 (MTTTDTAPQS…SEDLPLNLSR (334 aa)). Residues 335-548 (EMLQNNPQLA…GLGPDRALER (214 aa)) form a b region. The c stretch occupies residues 549 to 620 (MLAQQNRGAA…RLNRLVLRAL (72 aa)).

This sequence belongs to the heat shock protein 90 family. As to quaternary structure, homodimer.

It is found in the cytoplasm. Its function is as follows. Molecular chaperone. Has ATPase activity. This Rhodopseudomonas palustris (strain BisB18) protein is Chaperone protein HtpG.